A 147-amino-acid chain; its full sequence is Bis(5'-nucleosyl)-tetraphosphatase [asymmetrical] (147 aa).

Alanine 2 is subject to N-acetylalanine. The 138-residue stretch at 2 to 139 (ALRACGLIIF…DMKAVLQEGH (138 aa)) folds into the Nudix hydrolase domain. Residues 43-64 (GHVEPGESDLQTALRETQEEAG) carry the Nudix box motif.

Belongs to the Nudix hydrolase family. A divalent metal cation serves as cofactor.

The enzyme catalyses P(1),P(4)-bis(5'-guanosyl) tetraphosphate + H2O = GMP + GTP + 2 H(+). It carries out the reaction a 5'-end CoA-ribonucleoside in mRNA + H2O = a 5'-end phospho-adenosine-phospho-ribonucleoside in mRNA + (R)-4'-phosphopantetheine + 2 H(+). It catalyses the reaction a 5'-end FAD-phospho-ribonucleoside in mRNA + H2O = a 5'-end phospho-adenosine-phospho-ribonucleoside in mRNA + FMN + 2 H(+). Its activity is regulated as follows. Inhibited by fluoride ions. In terms of biological role, catalyzes the asymmetric hydrolysis of diadenosine 5',5'''-P1,P4-tetraphosphate (Ap4A) to yield AMP and ATP. Exhibits decapping activity towards FAD-capped RNAs and dpCoA-capped RNAs in vitro. The chain is Bis(5'-nucleosyl)-tetraphosphatase [asymmetrical] (NUDT2) from Sus scrofa (Pig).